The sequence spans 70 residues: Probable ferredoxin TA0517 (70 aa).

4Fe-4S ferredoxin-type domains are found at residues 8-36 (TEMDVDRNLCNYCGACVGMCPTDAIWLDE) and 37-66 (TVIKIHEEKCIECGFCIVGCPTGAITAEWF). Residues C17, C20, C23, C27, C46, C49, C52, and C56 each contribute to the [4Fe-4S] cluster site.

It depends on [4Fe-4S] cluster as a cofactor.

Ferredoxins are iron-sulfur proteins that transfer electrons in a wide variety of metabolic reactions. The sequence is that of Probable ferredoxin TA0517 from Thermoplasma acidophilum (strain ATCC 25905 / DSM 1728 / JCM 9062 / NBRC 15155 / AMRC-C165).